The chain runs to 689 residues: Beta-adrenergic receptor kinase 1 (689 aa).

The tract at residues 1 to 190 (MADLEAVLAD…ELNIHLTMND (190 aa)) is N-terminal. Positions 54–175 (TFEKIFSQKL…IESDKFTRFC (122 aa)) constitute an RGS domain. Positions 191–453 (FSVHRIIGRG…AQEIKESPFF (263 aa)) constitute a Protein kinase domain. Residues 197–205 (IGRGGFGEV) and Lys220 contribute to the ATP site. Catalysis depends on Asp317, which acts as the Proton acceptor. Residues 454–521 (RSLDWQMVFL…TISERWQQEV (68 aa)) enclose the AGC-kinase C-terminal domain. The 95-residue stretch at 558-652 (DCIMHGYMSK…WKKELRDAYR (95 aa)) folds into the PH domain. The residue at position 670 (Ser670) is a Phosphoserine.

It belongs to the protein kinase superfamily. AGC Ser/Thr protein kinase family. GPRK subfamily. In terms of assembly, interacts with the heterodimer formed by GNB1 and GNG2. Interacts with GIT1. Interacts with, and phosphorylates chemokine-stimulated CCR5. Interacts with ARRB1. Interacts with LPAR1 and LPAR2. Interacts with RALA in response to LPAR1 activation. ADRBK1 and RALA mutually inhibit each other's binding to LPAR1. Interacts with ADRB2. As to expression, expressed at low levels in brain cortex, hippocampus, striatum, hypothalamus, cerebellum and brainstem (at protein level).

The protein localises to the cytoplasm. Its subcellular location is the cell membrane. The protein resides in the postsynapse. It localises to the presynapse. The enzyme catalyses [beta-adrenergic receptor] + ATP = [beta-adrenergic receptor]-phosphate + ADP + H(+). Its activity is regulated as follows. In contrast to other AGC family kinases, the catalytic activity is solely regulated by the binding of substrates and ligands, not by phosphorylation of the kinase domain. Specifically phosphorylates the agonist-occupied form of the beta-adrenergic and closely related receptors, probably inducing a desensitization of them. Key regulator of LPAR1 signaling. Competes with RALA for binding to LPAR1 thus affecting the signaling properties of the receptor. Desensitizes LPAR1 and LPAR2 in a phosphorylation-independent manner. Positively regulates ciliary smoothened (SMO)-dependent Hedgehog (Hh) signaling pathway by facilitating the trafficking of SMO into the cilium and the stimulation of SMO activity. Inhibits relaxation of airway smooth muscle in response to blue light. The sequence is that of Beta-adrenergic receptor kinase 1 from Rattus norvegicus (Rat).